A 378-amino-acid chain; its full sequence is TelA-like protein SAS1347 (378 aa).

Belongs to the TelA family.

The protein is TelA-like protein SAS1347 of Staphylococcus aureus (strain MSSA476).